The sequence spans 1025 residues: Interferon-induced helicase C domain-containing protein 1 (1025 aa).

CARD domains lie at 7–97 (AEDS…YVKP) and 110–190 (AHDE…QTGN). Residues lysine 23 and lysine 43 each participate in a glycyl lysine isopeptide (Lys-Gly) (interchain with G-Cter in ISG15) cross-link. The segment at 273–297 (SLGHNSNMGRDSGTMGSDSDESVIQ) is disordered. Positions 275–297 (GHNSNMGRDSGTMGSDSDESVIQ) are enriched in polar residues. Residues serine 289, serine 291, and serine 302 each carry the phosphoserine modification. One can recognise a Helicase ATP-binding domain in the interval 317-510 (AQPALDGKNI…SEAEKHILNI (194 aa)). Phosphoserine is present on residues serine 645 and serine 648. Positions 700–872 (KLIKLRNTIL…NMKPEEYAHK (173 aa)) constitute a Helicase C-terminal domain. Residue serine 828 is modified to Phosphoserine; by RIOK3. The RLR CTR domain maps to 893–1020 (AKQYNDNPSL…PDLDYSEYCL (128 aa)). Positions 907, 910, 962, and 964 each coordinate Zn(2+).

It belongs to the helicase family. RLR subfamily. In terms of assembly, monomer in the absence of ligands and homodimerizes in the presence of dsRNA ligands. Can assemble into helical or linear polymeric filaments on long dsRNA. Interacts with MAVS/IPS1. Interacts (via the CARD domains) with TKFC, the interaction is inhibited by viral infection. Interacts with PCBP2. Interacts with NLRC5. Interacts with PIAS2-beta. Interacts with DDX60. Interacts with ANKRD17. Interacts with IKBKE. Interacts with ATG5 and ATG12, either as ATG5 and ATG12 monomers or as ATG12-ATG5 conjugates. Interacts with ZCCHC3; leading to activate IFIH1/MDA5. Interacts with RNF123. Interacts with DDX3X. Interacts with NOD1; this interaction promotes transcription of antiviral genes and inhibition of viral replication. Interacts with ECSIT; this interaction bridges IFIH1 to the MAVS complex at the mitochondrion. Post-translationally, during apoptosis, processed into 3 cleavage products. The helicase-containing fragment, once liberated from the CARD domains, translocate from the cytoplasm to the nucleus. The processed protein significantly sensitizes cells to DNA degradation. Sumoylated. Sumoylation positively regulates its role in type I interferon induction and is enhanced by PIAS2-beta. In terms of processing, ubiquitinated by RNF125, leading to its degradation by the proteasome. USP17/UPS17L2-dependent deubiquitination positively regulates the receptor. Ubiquitinated by TRIM25 via 'Lys-63'-linked ubiquitination, promoting activation of IFIH1/MDA5. Ubiquitinated by TRIM40 via 'Lys-48'-linked ubiquitination; leading to proteasomal degradation. Ubiquitinated by TRIM65 via 'Lys-63'-linked ubiquitination, promoting activation of IFIH1/MDA5. Post-translationally, ISGylated by ISG15. ISGylation increases upon infection with viruses. ISGylation at Lys-23 and Lys-43 is dependent of dephosphorylation, regulates mitochondrial translocation and oligomerization. Essential for IFIH1/MDA5-mediated cytokine responses and restriction of virus replication. Phosphorylated. Dephosphorylated by phsophatases PP1; dephosphorylation precedes and is required for ISGylation. As to expression, expression is prominent in lung, liver, kidney, heart and spleen (at protein level). Widely expressed at low level.

It is found in the cytoplasm. The protein resides in the nucleus. Its subcellular location is the mitochondrion. The enzyme catalyses ATP + H2O = ADP + phosphate + H(+). Functionally, innate immune receptor which acts as a cytoplasmic sensor of viral nucleic acids and plays a major role in sensing viral infection and in the activation of a cascade of antiviral responses including the induction of type I interferons and pro-inflammatory cytokines. Its ligands include mRNA lacking 2'-O-methylation at their 5' cap and long-dsRNA (&gt;1 kb in length). Upon ligand binding it associates with mitochondria antiviral signaling protein (MAVS/IPS1) which activates the IKK-related kinases: TBK1 and IKBKE which phosphorylate interferon regulatory factors: IRF3 and IRF7 which in turn activate transcription of antiviral immunological genes, including interferons (IFNs); IFN-alpha and IFN-beta. Responsible for detecting the Picornaviridae family members such as encephalomyocarditis virus (EMCV), mengo encephalomyocarditis virus (ENMG), and theiler's murine encephalomyelitis virus (TMEV). Can also detect other viruses such as dengue virus (DENV), west Nile virus (WNV), and reovirus. Also involved in antiviral signaling in response to viruses containing a dsDNA genome, such as vaccinia virus. Plays an important role in amplifying innate immune signaling through recognition of RNA metabolites that are produced during virus infection by ribonuclease L (RNase L). May play an important role in enhancing natural killer cell function and may be involved in growth inhibition and apoptosis in several tumor cell lines. In Mus musculus (Mouse), this protein is Interferon-induced helicase C domain-containing protein 1.